The following is a 354-amino-acid chain: Peptide chain release factor 1 (354 aa).

Residue Gln-230 is modified to N5-methylglutamine.

It belongs to the prokaryotic/mitochondrial release factor family. In terms of processing, methylated by PrmC. Methylation increases the termination efficiency of RF1.

It localises to the cytoplasm. Its function is as follows. Peptide chain release factor 1 directs the termination of translation in response to the peptide chain termination codons UAG and UAA. The sequence is that of Peptide chain release factor 1 from Rhodospirillum rubrum (strain ATCC 11170 / ATH 1.1.1 / DSM 467 / LMG 4362 / NCIMB 8255 / S1).